A 1065-amino-acid chain; its full sequence is Probable arabinosyltransferase B (1065 aa).

The next 12 helical transmembrane spans lie at 15 to 37 (WVAT…LPVV), 204 to 226 (LKLA…LWRL), 241 to 263 (NWRT…HVIG), 394 to 413 (YSRL…TLGV), 417 to 436 (GLIA…RILV), 441 to 463 (VVGT…TVVF), 510 to 527 (FGFL…FIML), 540 to 557 (AWRL…LMFT), 567 to 589 (LFAA…AVLG), 596 to 618 (AFLA…WWYV), 633 to 655 (GGIT…AIWL), and 667 to 689 (LARA…VFIA).

This sequence belongs to the emb family.

The protein resides in the cell membrane. Arabinosyl transferase responsible for the polymerization of arabinose into the arabinan of arabinogalactan. This Mycobacterium avium protein is Probable arabinosyltransferase B (embB).